A 165-amino-acid polypeptide reads, in one-letter code: Plastocyanin, chloroplastic (165 aa).

The transit peptide at 1–66 (MATVTSSAAV…AGILAGNAMA (66 aa)) directs the protein to the chloroplast. A Plastocyanin-like domain is found at 67-165 (AEVLLGSSDG…AGMVGKVTVN (99 aa)). Residues His-103, Cys-150, His-153, and Met-158 each coordinate Cu cation.

This sequence belongs to the plastocyanin family. Cu(2+) is required as a cofactor.

Its subcellular location is the plastid. It localises to the chloroplast thylakoid membrane. Participates in electron transfer between P700 and the cytochrome b6-f complex in photosystem I. This chain is Plastocyanin, chloroplastic (PETE), found in Silene latifolia subsp. alba (White campion).